The following is a 296-amino-acid chain: 4-hydroxybenzoate octaprenyltransferase (296 aa).

Transmembrane regions (helical) follow at residues 28 to 48 (PIGI…AGNG), 52 to 72 (LANV…GCCI), 102 to 122 (ALTL…CTNS), 145 to 167 (TYYP…FTAA), 174 to 196 (GAWL…YAMV), 219 to 239 (SIIL…GSRF), 241 to 261 (LGGW…WEYW), and 275 to 295 (FLHN…DYAL).

This sequence belongs to the UbiA prenyltransferase family. Mg(2+) is required as a cofactor.

The protein localises to the cell inner membrane. It catalyses the reaction all-trans-octaprenyl diphosphate + 4-hydroxybenzoate = 4-hydroxy-3-(all-trans-octaprenyl)benzoate + diphosphate. The protein operates within cofactor biosynthesis; ubiquinone biosynthesis. In terms of biological role, catalyzes the prenylation of para-hydroxybenzoate (PHB) with an all-trans polyprenyl group. Mediates the second step in the final reaction sequence of ubiquinone-8 (UQ-8) biosynthesis, which is the condensation of the polyisoprenoid side chain with PHB, generating the first membrane-bound Q intermediate 3-octaprenyl-4-hydroxybenzoate. The protein is 4-hydroxybenzoate octaprenyltransferase of Pseudomonas putida (strain ATCC 700007 / DSM 6899 / JCM 31910 / BCRC 17059 / LMG 24140 / F1).